The following is a 444-amino-acid chain: MAKLFGTDGVRGVANTELTAELAFRLGRAGAHVLTRQGHSKKIIIGRDTRISGDMLEAALVAGICSVGVDVYKIGVLPTPGIAYLTRKLGAGAGVVISASHNPVQDNGIKFFGPSGYKLPDELESQIEKLALDDQAELPRPTGGELGRLYYVEDAVDQYVDFAKATISTDLKGLKIVVDCANGAAYAVAPRILSELGAEVIPIFHRPDGVNINAHCGSTHPETLMEEVVKQGADLGLAHDGDADRVLAVDHLGNLVDGDQIMVLCAKHLKSKGKLRKNTTVVTVMSNLGLYKALERSGIEVVETKVGDRYVLEKLLETGARFGGEQSGHIIFLQHNTTGDGIITALQLLAVVKETGMSLAQLAGQMERYPQILKNVQVKDKNYVMNSPIISEAIRRFERDLAGQGRILVRPSGTEPLVRIMVEGKDMAELQSIVDKMAEIVGNI.

Residue S100 is the Phosphoserine intermediate of the active site. Mg(2+) contacts are provided by S100, D240, D242, and D244. Position 100 is a phosphoserine (S100).

The protein belongs to the phosphohexose mutase family. Requires Mg(2+) as cofactor. Post-translationally, activated by phosphorylation.

It catalyses the reaction alpha-D-glucosamine 1-phosphate = D-glucosamine 6-phosphate. Functionally, catalyzes the conversion of glucosamine-6-phosphate to glucosamine-1-phosphate. The sequence is that of Phosphoglucosamine mutase from Desulforamulus reducens (strain ATCC BAA-1160 / DSM 100696 / MI-1) (Desulfotomaculum reducens).